Reading from the N-terminus, the 677-residue chain is Mitochondrial disaggregase (677 aa).

A mitochondrion-targeting transit peptide spans 1–28; that stretch reads MLGSLVSKRTAPAPRLLLQLLRSPSLRS. Residues 92–126 form an autoinhibitory region; that stretch reads PSPEDTLPGQDSWNGVLSRAGLGVWALATALVVHC. 4 ANK repeats span residues 133-162, 166-195, 235-265, and 268-297; these read SKDA…DVNA, LGWT…DPNL, KGCT…PLQR, and MGHT…EKQR. ATP contacts are provided by H316, I318, S353, G354, I355, G356, K357, T358, E425, and N466. The interval 477–505 is regulatory; slows ATPase and disaggregase activities; sequence LQLRQEALEMSRNRIAENLGDVQISDKIT. R531 contributes to the ATP binding site. K559 is modified (N6-acetyllysine). R590 provides a ligand contact to ATP.

Belongs to the ClpA/ClpB family. As to quaternary structure, homododecamer when substrate-bound; the homododecamer consists of 2 homohexamers stacked head-to-head via ANK repeat-mediated interactions. The active substrate-bound form is likely to exist in a dynamic equilibrium between homohexamers and homododecamers. Homotetradecamer in the unbound state which is remodeled upon substrate binding into the homododecamer. Interacts with PHB and PHB2. Interacts with MAVS; the interaction is enhanced by Sendai virus infection. In terms of processing, proteolytically cleaved by protease PARL. ATP-dependent protein disaggregase activity is stimulated by PARL-mediated cleavage of the N-terminal autoinhibitory peptide.

Its subcellular location is the mitochondrion intermembrane space. It catalyses the reaction ATP + H2O = ADP + phosphate + H(+). Disaggregase activity is inhibited by ADP. Its function is as follows. Functions as a regulatory ATPase and participates in secretion/protein trafficking process. Has ATP-dependent protein disaggregase activity and is required to maintain the solubility of key mitochondrial proteins. Involved in mitochondrial-mediated antiviral innate immunity, activates RIG-I-mediated signal transduction and production of IFNB1 and pro-inflammatory cytokine IL6. Plays a role in granulocyte differentiation. The polypeptide is Mitochondrial disaggregase (Bos taurus (Bovine)).